The sequence spans 910 residues: Protein translocase subunit SecA (910 aa).

ATP-binding positions include Q89, 107–111 (GEGKT), and D502. C894, C896, C905, and H906 together coordinate Zn(2+).

It belongs to the SecA family. Monomer and homodimer. Part of the essential Sec protein translocation apparatus which comprises SecA, SecYEG and auxiliary proteins SecDF-YajC and YidC. Requires Zn(2+) as cofactor.

The protein resides in the cell inner membrane. The protein localises to the cytoplasm. It carries out the reaction ATP + H2O + cellular proteinSide 1 = ADP + phosphate + cellular proteinSide 2.. Part of the Sec protein translocase complex. Interacts with the SecYEG preprotein conducting channel. Has a central role in coupling the hydrolysis of ATP to the transfer of proteins into and across the cell membrane, serving both as a receptor for the preprotein-SecB complex and as an ATP-driven molecular motor driving the stepwise translocation of polypeptide chains across the membrane. This chain is Protein translocase subunit SecA, found in Chelativorans sp. (strain BNC1).